Consider the following 414-residue polypeptide: Protein IQ-DOMAIN 8 (414 aa).

A Nuclear localization signal 1 motif is present at residues 14–21; sequence NKKNITDD. The interval 40-61 is disordered; it reads LISSSKGFKSRGGSYGTPSLGS. 3 consecutive IQ domains span residues 92 to 120, 121 to 143, and 144 to 169; these read REWA…AVVR, IQAI…CMQA, and LVRV…EKPS. The tract at residues 119-132 is calmodulin-binding; it reads VRIQAIFRGRQVRK. Disordered stretches follow at residues 156 to 190, 218 to 244, and 262 to 329; these read NRGP…SPGS, HQPR…SCKS, and GRLM…SGSF. The segment covering 164–184 has biased composition (basic and acidic residues); that stretch reads ELEKPSDQQKDDPAKQAEKGW. The segment covering 231–244 has biased composition (polar residues); the sequence is KQGSVKKNNGSCKS. A compositionally biased stretch (basic and acidic residues) spans 274–289; it reads NARKSESSVSEHDTVQ. Residues 307-328 are compositionally biased toward low complexity; that stretch reads SSSATSSESSSTSQSPVPFSGS. The Nuclear localization signal 2 signature appears at 336–343; it reads YRKPSYMS. The disordered stretch occupies residues 347–398; the sequence is SIKAKQRRSGSSSSCSKTPFEKKQSMSYNGDVNVRRSAGSDPLNNQWTDLYP.

It belongs to the IQD family. In terms of assembly, binds to multiple calmodulin (CaM) in the presence of Ca(2+) and CaM-like proteins.

The protein resides in the nucleus. It localises to the cytoplasm. It is found in the cytoskeleton. The protein localises to the nucleus envelope. In terms of biological role, may be involved in cooperative interactions with calmodulins or calmodulin-like proteins. Recruits calmodulin proteins to microtubules, thus being a potential scaffold in cellular signaling and trafficking. May associate with nucleic acids and regulate gene expression at the transcriptional or post-transcriptional level. In Arabidopsis thaliana (Mouse-ear cress), this protein is Protein IQ-DOMAIN 8.